Here is a 498-residue protein sequence, read N- to C-terminus: L-amino acid oxidase Cdc18 (498 aa).

The first 2 residues, 1–2, serve as a signal peptide directing secretion; it reads SC. C12 and C173 are oxidised to a cystine. Residues 45 to 46, 65 to 66, R73, and 87 to 90 contribute to the FAD site; these read MA, EA, and GPMR. The substrate site is built by R90 and H223. Residue V263 coordinates FAD. A disulfide bridge connects residues C333 and C414. Residue N363 is glycosylated (N-linked (GlcNAc...) asparagine). Y374 is a substrate binding site. Residues E459 and 466–471 contribute to the FAD site; that span reads GWIDST. 466 to 467 is a substrate binding site; sequence GW.

The protein belongs to the flavin monoamine oxidase family. FIG1 subfamily. In terms of assembly, monomer. This is in contrast with most of its orthologs, that are non-covalently linked homodimers. FAD serves as cofactor. Expressed by the venom gland.

The protein localises to the secreted. It catalyses the reaction an L-alpha-amino acid + O2 + H2O = a 2-oxocarboxylate + H2O2 + NH4(+). It carries out the reaction L-leucine + O2 + H2O = 4-methyl-2-oxopentanoate + H2O2 + NH4(+). Catalyzes an oxidative deamination of predominantly hydrophobic and aromatic L-amino acids, thus producing hydrogen peroxide that may contribute to the diverse toxic effects of this enzyme. Shows activity on L-Leu. Damages cell membranes of the Gram-positive bacteria S.aureus (MIC=8 ug/ml and MBC=16 ug/ml) and the Gram-negative bacteria A.baumannii (MIC=16 ug/ml and MBC=32 ug/ml). This antimicrobial activity is dependent on the production of hydrogen peroxyde, since it is inhibited by catalase, a hydrogen peroxyde scavenger. The chain is L-amino acid oxidase Cdc18 from Crotalus durissus cumanensis (South American rattlesnake).